Here is a 193-residue protein sequence, read N- to C-terminus: Peptidyl-tRNA hydrolase (193 aa).

Tyr-15 lines the tRNA pocket. Residue His-20 is the Proton acceptor of the active site. 3 residues coordinate tRNA: Phe-65, Asn-67, and Asn-113.

It belongs to the PTH family. In terms of assembly, monomer.

The protein resides in the cytoplasm. The enzyme catalyses an N-acyl-L-alpha-aminoacyl-tRNA + H2O = an N-acyl-L-amino acid + a tRNA + H(+). In terms of biological role, hydrolyzes ribosome-free peptidyl-tRNAs (with 1 or more amino acids incorporated), which drop off the ribosome during protein synthesis, or as a result of ribosome stalling. Catalyzes the release of premature peptidyl moieties from peptidyl-tRNA molecules trapped in stalled 50S ribosomal subunits, and thus maintains levels of free tRNAs and 50S ribosomes. The polypeptide is Peptidyl-tRNA hydrolase (Ehrlichia canis (strain Jake)).